The following is a 321-amino-acid chain: Tetraacyldisaccharide 4'-kinase (321 aa).

54–61 (SVGGTGKT) lines the ATP pocket.

Belongs to the LpxK family.

It catalyses the reaction a lipid A disaccharide + ATP = a lipid IVA + ADP + H(+). The protein operates within glycolipid biosynthesis; lipid IV(A) biosynthesis; lipid IV(A) from (3R)-3-hydroxytetradecanoyl-[acyl-carrier-protein] and UDP-N-acetyl-alpha-D-glucosamine: step 6/6. Transfers the gamma-phosphate of ATP to the 4'-position of a tetraacyldisaccharide 1-phosphate intermediate (termed DS-1-P) to form tetraacyldisaccharide 1,4'-bis-phosphate (lipid IVA). This is Tetraacyldisaccharide 4'-kinase from Rickettsia peacockii (strain Rustic).